Here is a 1028-residue protein sequence, read N- to C-terminus: Endosome/lysosome-associated apoptosis and autophagy regulator family member 2 (1028 aa).

Residues 1–47 form the signal peptide; the sequence is MLLLTLRRAKGRDRGRPAGGPRRALSLPWSPAWICCWALAGCQAVWA. Residues 48 to 928 are Extracellular-facing; that stretch reads GDSSSSGRPL…TCETVDFWLK (881 aa). Asn-168 is a glycosylation site (N-linked (GlcNAc...) asparagine). Cystine bridges form between Cys-292/Cys-309, Cys-322/Cys-345, and Cys-325/Cys-357. Residues Asn-404 and Asn-690 are each glycosylated (N-linked (GlcNAc...) asparagine). Positions 671–876 constitute an MRH domain; that stretch reads SDCFFYHEKE…LWESAEACPL (206 aa). 4 disulfides stabilise this stretch: Cys-673-Cys-719, Cys-729-Cys-757, Cys-826-Cys-862, and Cys-838-Cys-874. A helical transmembrane segment spans residues 929-949; sequence VGAGVGAFTAVLLVALTCYFW. Residues 950-1028 are Cytoplasmic-facing; the sequence is KKNQKLEYKY…QLKSSRCPNI (79 aa). Ser-1017 is subject to Phosphoserine.

It belongs to the ELAPOR family.

It is found in the cell membrane. Functions as a regulator of the BMP signaling pathway and may be involved in epidermal differentiation. The sequence is that of Endosome/lysosome-associated apoptosis and autophagy regulator family member 2 from Mus musculus (Mouse).